A 293-amino-acid polypeptide reads, in one-letter code: Proline iminopeptidase (293 aa).

One can recognise an AB hydrolase-1 domain in the interval 28 to 277 (KPLVLLHGGP…FSRHMPFVEE (250 aa)). Serine 104 serves as the catalytic Nucleophile. Aspartate 244 is a catalytic residue. Catalysis depends on histidine 271, which acts as the Proton donor.

It belongs to the peptidase S33 family.

It carries out the reaction Release of N-terminal proline from a peptide.. Its function is as follows. Releases the N-terminal proline from various substrates. The sequence is that of Proline iminopeptidase from Clostridium botulinum (strain Hall / ATCC 3502 / NCTC 13319 / Type A).